Consider the following 89-residue polypeptide: Large ribosomal subunit protein eL34 (89 aa).

Residues 41-69 are disordered; the sequence is RPLNGVPRGRPSELRKLPKTAKRPERPYP. A compositionally biased stretch (basic and acidic residues) spans 50 to 66; it reads RPSELRKLPKTAKRPER.

The protein belongs to the eukaryotic ribosomal protein eL34 family.

The polypeptide is Large ribosomal subunit protein eL34 (Thermococcus gammatolerans (strain DSM 15229 / JCM 11827 / EJ3)).